Reading from the N-terminus, the 256-residue chain is Eukaryotic translation initiation factor 3 subunit J (256 aa).

Positions 1 to 67 (MAAAAAGDSD…KEEAEVKPEV (67 aa)) are sufficient for interaction with EIF3B. A disordered region spans residues 1–106 (MAAAAAGDSD…LEEPEEPKVL (106 aa)). A phosphoserine mark is found at S9, S11, and S18. Residues 38-57 (EGEDEDEDVKDNWDDDDDEK) are compositionally biased toward acidic residues. Residues 58-104 (KEEAEVKPEVKISEKKKIAEKIKEKERQQKKRQEEIKKRLEEPEEPK) show a composition bias toward basic and acidic residues. The stretch at 68 to 133 (KISEKKKIAE…ESDLELAKET (66 aa)) forms a coiled coil. Residue K104 forms a Glycyl lysine isopeptide (Lys-Gly) (interchain with G-Cter in SUMO2) linkage. A Phosphothreonine modification is found at T107. S125 carries the post-translational modification Phosphoserine. The segment at 214-243 (QSKAKKKKKGVVPGGGLKATMKDDLADYGG) is disordered. Residues 241-256 (YGGYDGGYAQDYEDFM) are promotes stable association with the 40S ribosome. Y252 is subject to Phosphotyrosine.

It belongs to the eIF-3 subunit J family. As to quaternary structure, component of the eukaryotic translation initiation factor 3 (eIF-3) complex, which is composed of 13 subunits: EIF3A, EIF3B, EIF3C, EIF3D, EIF3E, EIF3F, EIF3G, EIF3H, EIF3I, EIF3J, EIF3K, EIF3L and EIF3M. The eIF-3 complex appears to include 3 stable modules: module A is composed of EIF3A, EIF3B, EIF3G and EIF3I; module B is composed of EIF3F, EIF3H, and EIF3M; and module C is composed of EIF3C, EIF3D, EIF3E, EIF3K and EIF3L. EIF3C of module C binds EIF3B of module A and EIF3H of module B, thereby linking the three modules. EIF3J is a labile subunit that binds to the eIF-3 complex via EIF3B. The eIF-3 complex interacts with RPS6KB1 under conditions of nutrient depletion. Mitogenic stimulation leads to binding and activation of a complex composed of MTOR and RPTOR, leading to phosphorylation and release of RPS6KB1 and binding of EIF4B to eIF-3. Post-translationally, phosphorylated. Phosphorylation is enhanced upon serum stimulation.

It is found in the cytoplasm. Component of the eukaryotic translation initiation factor 3 (eIF-3) complex, which is required for several steps in the initiation of protein synthesis. The eIF-3 complex associates with the 40S ribosome and facilitates the recruitment of eIF-1, eIF-1A, eIF-2:GTP:methionyl-tRNAi and eIF-5 to form the 43S pre-initiation complex (43S PIC). The eIF-3 complex stimulates mRNA recruitment to the 43S PIC and scanning of the mRNA for AUG recognition. The eIF-3 complex is also required for disassembly and recycling of post-termination ribosomal complexes and subsequently prevents premature joining of the 40S and 60S ribosomal subunits prior to initiation. The eIF-3 complex specifically targets and initiates translation of a subset of mRNAs involved in cell proliferation, including cell cycling, differentiation and apoptosis, and uses different modes of RNA stem-loop binding to exert either translational activation or repression. This subunit binds directly within the mRNA entry channel of the 40S ribosome to the aminoacyl (A) site. It may regulate the interaction between the 43S PIC and mRNA. The polypeptide is Eukaryotic translation initiation factor 3 subunit J (Bos taurus (Bovine)).